Reading from the N-terminus, the 261-residue chain is Short-chain dehydrogenase/reductase ARMGADRAFT_1018421 (261 aa).

NADP(+) is bound by residues isoleucine 21, aspartate 68, asparagine 95, lysine 128, tyrosine 161, lysine 165, valine 194, and threonine 196. Tyrosine 161 serves as the catalytic Proton acceptor. The active-site Lowers pKa of active site Tyr is the lysine 165.

It belongs to the short-chain dehydrogenases/reductases (SDR) family.

Its pathway is secondary metabolite biosynthesis. Functionally, short-chain dehydrogenase/reductase, part of the gene cluster that mediates the biosynthesis of melleolides, a range of antifungal and phytotoxic polyketide derivatives composed of an orsellinic acid (OA) moiety esterified to various sesquiterpene alcohols. The first step in melleolides biosynthesis is performed by the delta(6)-protoilludene synthase PRO1 which catalyzes the cyclization of farnesyl diphosphate to protoilludene. The orsellinic acid synthase armB produces OA by condensing acetyl-CoA with 3 malonyl-CoA units in a three-round chain elongation reaction folowed by a C2-C7 ring closure. ArmB further catalyzes the trans-esterification of OA to the various sesquiterpene alcohols resulting from the hydroxylation of protoilludene. The melleolides cluster also includes 5 cytochrome P450 monooxygenases, 4 NAD(+)-dependent oxidoreductases, one flavin-dependent oxidoreductase, and one O-methyltransferase. The cytochrome P450 monooxygenases may be involved in protoilludene hydroxylation to elaborate melleolides with multiple alcohol groups, such as melleolide D, which carries alcohol functionalities at C-4, C-5, C-10, and C-13. The role of the NAD(+)-dependent enzymes remains unknown. Numerous melleolides, including arnamial, show 5'-O-methylation of the aromatic moiety which may be catalyzed by the methyltransferase encoded in the cluster. The flavin-dependent oxidoreductase might represent the dehydrogenase yielding the aldehyde in position 1 of arnamial and other melleolides. Finally, several halogenase localized outside of the cluster, are able to catalyze the transfer of a single chlorine atom to the melleolide backbone, resulting in a 6'-chloromelleolide product. In Armillaria gallica (Bulbous honey fungus), this protein is Short-chain dehydrogenase/reductase ARMGADRAFT_1018421.